The following is a 164-amino-acid chain: ATP synthase subunit b (164 aa).

Residues 10–32 (AVAFVLFFVLFGKKLWTPLAAAL) traverse the membrane as a helical segment.

This sequence belongs to the ATPase B chain family. F-type ATPases have 2 components, F(1) - the catalytic core - and F(0) - the membrane proton channel. F(1) has five subunits: alpha(3), beta(3), gamma(1), delta(1), epsilon(1). F(0) has three main subunits: a(1), b(2) and c(10-14). The alpha and beta chains form an alternating ring which encloses part of the gamma chain. F(1) is attached to F(0) by a central stalk formed by the gamma and epsilon chains, while a peripheral stalk is formed by the delta and b chains.

It localises to the cell inner membrane. Functionally, f(1)F(0) ATP synthase produces ATP from ADP in the presence of a proton or sodium gradient. F-type ATPases consist of two structural domains, F(1) containing the extramembraneous catalytic core and F(0) containing the membrane proton channel, linked together by a central stalk and a peripheral stalk. During catalysis, ATP synthesis in the catalytic domain of F(1) is coupled via a rotary mechanism of the central stalk subunits to proton translocation. Component of the F(0) channel, it forms part of the peripheral stalk, linking F(1) to F(0). This chain is ATP synthase subunit b, found in Gluconacetobacter diazotrophicus (strain ATCC 49037 / DSM 5601 / CCUG 37298 / CIP 103539 / LMG 7603 / PAl5).